We begin with the raw amino-acid sequence, 90 residues long: Large ribosomal subunit protein eL31 (90 aa).

Belongs to the eukaryotic ribosomal protein eL31 family.

This chain is Large ribosomal subunit protein eL31, found in Natronomonas pharaonis (strain ATCC 35678 / DSM 2160 / CIP 103997 / JCM 8858 / NBRC 14720 / NCIMB 2260 / Gabara) (Halobacterium pharaonis).